The sequence spans 379 residues: Anhydro-N-acetylmuramic acid kinase (379 aa).

9-16 (GTSADGVD) is an ATP binding site.

Belongs to the anhydro-N-acetylmuramic acid kinase family.

It catalyses the reaction 1,6-anhydro-N-acetyl-beta-muramate + ATP + H2O = N-acetyl-D-muramate 6-phosphate + ADP + H(+). It functions in the pathway amino-sugar metabolism; 1,6-anhydro-N-acetylmuramate degradation. It participates in cell wall biogenesis; peptidoglycan recycling. Functionally, catalyzes the specific phosphorylation of 1,6-anhydro-N-acetylmuramic acid (anhMurNAc) with the simultaneous cleavage of the 1,6-anhydro ring, generating MurNAc-6-P. Is required for the utilization of anhMurNAc either imported from the medium or derived from its own cell wall murein, and thus plays a role in cell wall recycling. The sequence is that of Anhydro-N-acetylmuramic acid kinase from Parasynechococcus marenigrum (strain WH8102).